Reading from the N-terminus, the 284-residue chain is Tropomyosin Por p 1.0101 (284 aa).

Met1 carries the N-acetylmethionine modification. The segment at 1–21 (MDAIKKKMQAMKLEKDDAMDR) is disordered. A coiled-coil region spans residues 1 to 280 (MDAIKKKMQA…TDELDQAFSE (280 aa)). Over residues 12–21 (KLEKDDAMDR) the composition is skewed to basic and acidic residues.

Belongs to the tropomyosin family. In terms of assembly, homodimer. Expressed in muscle (at protein level). Expressed in pincer muscles.

In terms of biological role, tropomyosin, in association with the troponin complex, plays a central role in the calcium dependent regulation of muscle contraction. The polypeptide is Tropomyosin Por p 1.0101 (Portunus pelagicus (Blue swimmer crab)).